We begin with the raw amino-acid sequence, 187 residues long: ATP synthase subunit delta (187 aa).

Belongs to the ATPase delta chain family. In terms of assembly, F-type ATPases have 2 components, F(1) - the catalytic core - and F(0) - the membrane proton channel. F(1) has five subunits: alpha(3), beta(3), gamma(1), delta(1), epsilon(1). F(0) has three main subunits: a(1), b(2) and c(10-14). The alpha and beta chains form an alternating ring which encloses part of the gamma chain. F(1) is attached to F(0) by a central stalk formed by the gamma and epsilon chains, while a peripheral stalk is formed by the delta and b chains.

The protein resides in the cell inner membrane. In terms of biological role, f(1)F(0) ATP synthase produces ATP from ADP in the presence of a proton or sodium gradient. F-type ATPases consist of two structural domains, F(1) containing the extramembraneous catalytic core and F(0) containing the membrane proton channel, linked together by a central stalk and a peripheral stalk. During catalysis, ATP synthesis in the catalytic domain of F(1) is coupled via a rotary mechanism of the central stalk subunits to proton translocation. Its function is as follows. This protein is part of the stalk that links CF(0) to CF(1). It either transmits conformational changes from CF(0) to CF(1) or is implicated in proton conduction. The sequence is that of ATP synthase subunit delta from Leptospira biflexa serovar Patoc (strain Patoc 1 / Ames).